Here is a 483-residue protein sequence, read N- to C-terminus: PAT complex subunit CCDC47 (483 aa).

An N-terminal signal peptide occupies residues 1–20 (MKAFHTFCVVLLVFGSVSEA). Over 21–135 (KFDDFEDEED…PAHLQNSWES (115 aa)) the chain is Cytoplasmic. Residues 46 to 118 (MEDSVTESPQ…PDTSSSKNKD (73 aa)) are disordered. Residues 60–104 (TEDDEDETTVELEGQDENQEGDFEDADTQEGDTESEPYDDEEFEG) show a composition bias toward acidic residues. The segment covering 105–118 (YEDKPDTSSSKNKD) has biased composition (basic and acidic residues). The chain crosses the membrane as a helical span at residues 136–155 (YYLEILMVTGLLAYIMNYII). Residues 156-483 (GKNKNSRLAQ…KMKQIKVKAM (328 aa)) lie on the Lumenal side of the membrane. N-linked (GlcNAc...) asparagine glycosylation occurs at asparagine 178. The interval 424–483 (QRQEAAQSRREEKKRAEKERIMNEEDPEKQRRLEEAALRREQKKLEKKQMKMKQIKVKAM) is disordered. The span at 430–472 (QSRREEKKRAEKERIMNEEDPEKQRRLEEAALRREQKKLEKKQ) shows a compositional bias: basic and acidic residues. Positions 450–483 (PEKQRRLEEAALRREQKKLEKKQMKMKQIKVKAM) form a coiled coil. Residues 473 to 483 (MKMKQIKVKAM) show a composition bias toward basic residues.

The protein belongs to the CCDC47 family. As to quaternary structure, component of the PAT complex, composed of WDR83OS/Asterix and CCDC47. The PAT complex is part of the multi-pass translocon (MPT) complex, composed of three subcomplexes, the GEL complex (composed of RAB5IF/OPTI and TMCO1), the BOS complex (composed of NCLN/Nicalin, NOMO and TMEM147) and the PAT complex (composed of WDR83OS/Asterix and CCDC47). The MPT complex associates with the SEC61 complex. Interacts with VCP, HSPA5, DERL1, DERL2 and SELENOS.

The protein localises to the endoplasmic reticulum membrane. Its subcellular location is the rough endoplasmic reticulum membrane. Component of the multi-pass translocon (MPT) complex that mediates insertion of multi-pass membrane proteins into the lipid bilayer of membranes. The MPT complex takes over after the SEC61 complex: following membrane insertion of the first few transmembrane segments of proteins by the SEC61 complex, the MPT complex occludes the lateral gate of the SEC61 complex to promote insertion of subsequent transmembrane regions. Within the MPT complex, the PAT subcomplex sequesters any highly polar regions in the transmembrane domains away from the non-polar membrane environment until they can be buried in the interior of the fully assembled protein. Within the PAT subcomplex, CCDC47 occludes the lateral gate of the SEC61 complex. Involved in the regulation of calcium ion homeostasis in the ER. Required for proper protein degradation via the ERAD (ER-associated degradation) pathway. Has an essential role in the maintenance of ER organization during embryogenesis. The polypeptide is PAT complex subunit CCDC47 (Homo sapiens (Human)).